A 507-amino-acid polypeptide reads, in one-letter code: MAGRRLARASISAVGVWLLCALGLQATEAELPSAPAELPGGAACLSRFTSGVPSFVLDTEASVSNGATFLGSPTARRGWDCVRSCCTTQNCNLALVELQPDGGEDAISACFLMNCLYEQNFVCKFAPKEGFINYLTQELYRSYRELRTRGFGGSRIPRIWMGIDLKVQLQKPLVLNEADNTDWHLLQGDSDVRVERKRPEEVELWGLKEGTYLFQLTRTDSDQPEETANLTITVLTAKQTEDYCLASYKVGRCRGSFPRWYYDPKEQICKSFTFGGCLGNKNNYLREEECMLACKDVQGISPKRHHPVCSGSCHATQFRCSNGCCIDGFLECDDTPDCPDGSDEATCEKYTSGFDELQNIHFLSDKGYCAELPDTGFCKENIPRWYYNPFSERCARFTYGGCYGNKNNFEEEQQCLESCRGISKKDVFGLRREGSIPTVGSAEVAIAVFLVICIIVVLTILGYCFFKNQRKEFHSPLHHPPPTPASSTVSTTEDTEHLVYNHTTQPL.

Positions 1–29 (MAGRRLARASISAVGVWLLCALGLQATEA) are cleaved as a signal peptide. The region spanning 51–134 (GVPSFVLDTE…FAPKEGFINY (84 aa)) is the MANSC domain. N-linked (GlcNAc...) asparagine glycosylation is present at Asn229. The BPTI/Kunitz inhibitor 1 domain maps to 244–294 (CLASYKVGRCRGSFPRWYYDPKEQICKSFTFGGCLGNKNNYLREEECMLAC). 8 disulfides stabilise this stretch: Cys244–Cys294, Cys253–Cys277, Cys269–Cys290, Cys320–Cys338, Cys332–Cys347, Cys369–Cys419, Cys378–Cys402, and Cys394–Cys415. In terms of domain architecture, LDL-receptor class A spans 312–348 (SCHATQFRCSNGCCIDGFLECDDTPDCPDGSDEATCE). The region spanning 369–419 (CAELPDTGFCKENIPRWYYNPFSERCARFTYGGCYGNKNNFEEEQQCLESC) is the BPTI/Kunitz inhibitor 2 domain. Residue Asn501 is glycosylated (N-linked (GlcNAc...) asparagine).

In terms of assembly, interacts with HGFAC. Interacts with TMPRSS13; the interaction promotes the phosphorylation and cell membrane localization of TMPRSS13.

The protein localises to the secreted. It is found in the cytoplasm. It localises to the cell membrane. Functionally, inhibitor of HGFAC. Inhibits serine protease activity of ST14/matriptase in vitro. Inhibits serine protease activity of TMPRSS13, via the BPTI/Kunitz inhibitor 1 domain. The polypeptide is Kunitz-type protease inhibitor 1 (Spint1) (Mus musculus (Mouse)).